Here is a 98-residue protein sequence, read N- to C-terminus: MLEQQPAQNPLTVSMLNAQAQQVNKPLRDNVKAALKNYLSQLNGEDPTELYELVLSEIEHPMLDMVMQYTRGNQTRAATMLGINRGTLRKKLKKYGMG.

The H-T-H motif DNA-binding region spans 74 to 93 (QTRAATMLGINRGTLRKKLK).

This sequence belongs to the transcriptional regulatory Fis family. As to quaternary structure, homodimer.

Its function is as follows. Activates ribosomal RNA transcription. Plays a direct role in upstream activation of rRNA promoters. This Haemophilus ducreyi (strain 35000HP / ATCC 700724) protein is DNA-binding protein Fis.